A 371-amino-acid chain; its full sequence is MNKNKIDVKIETKKGSMDEWPEPIVRVQSLAESNLSSLPDRYIKPASLRPTTTEDAPTATNIPIIDLEGLFSEEGLSDDVIMARISEACRGWGFFQVVNHGVKPELMDAARENWREFFHMPVNAKETYSNSPRTYEGYGSRLGVEKGASLDWSDYYFLHLLPHHLKDFNKWPSFPPTIREVIDEYGEELVKLSGRIMRVLSTNLGLKEDKFQEAFGGENIGACLRVNYYPKCPRPELALGLSPHSDPGGMTILLPDDQVFGLQVRKDDTWITVKPHPHAFIVNIGDQIQILSNSTYKSVEHRVIVNSDKERVSLAFFYNPKSDIPIQPLQELVSTHNPPLYPPMTFDQYRLFIRTQGPQGKSHVESHISPR.

In terms of domain architecture, Fe2OG dioxygenase spans 219 to 320 (NIGACLRVNY…RVSLAFFYNP (102 aa)). Jasmonate is bound at residue Arg-225. Asn-227 and Tyr-229 together coordinate 2-oxoglutarate. Fe cation-binding residues include His-244, Asp-246, and His-301. 2 residues coordinate 2-oxoglutarate: Arg-311 and Ser-313. 2 residues coordinate jasmonate: Arg-350 and Arg-354.

Belongs to the iron/ascorbate-dependent oxidoreductase family. Requires L-ascorbate as cofactor. Fe(2+) serves as cofactor.

It carries out the reaction jasmonate + 2-oxoglutarate + O2 = (1R,2R)-12-hydroxyjasmonate + succinate + CO2. Its function is as follows. 2-oxoglutarate-dependent dioxygenase involved in the oxidation of jasmonate (JA), a stress-induced phytohormone synthesized in response to attack by pathogens and herbivores, which triggers the activation of defense responses via the JA-mediated signaling pathway. Converts JA to 12-hydroxyjasmonate (12OH-JA), an inactive form of JA. Is specific to free JA, and cannot oxidize the bioactive form jasmonoyl-L-isoleucine (JA-Ile) or other JA-amino acid conjugates. Prevents over-accumulation of JA and indirectly its bioactive form JA-Ile under stress response. Acts as a negative regulator of JA-mediated defense signaling, by contributing to 12OH-JA accumulation, which represses JA defense responses upon infection by the fungal pathogen Botrytis cinerea. Acts as a negative regulator of JA-mediated defense responses upon infestation by the herbivorous caterpillar Mamestra brassicae. May be involved in the catabolism of cytotoxic polycyclic aromatic hydrocarbons (PAHs). The polypeptide is Jasmonate-induced oxygenase 2 (Arabidopsis thaliana (Mouse-ear cress)).